The chain runs to 526 residues: Cytochrome P450 monooxygenase patI (526 aa).

Residues 1-6 lie on the Cytoplasmic side of the membrane; sequence MDILQL. A helical membrane pass occupies residues 7–29; that stretch reads APTHLLAILLSSTSALFLITYLL. Over 30 to 526 the chain is Lumenal; it reads RAGHRPSDLP…EAQEVFARFD (497 aa). Asparagine 81 is a glycosylation site (N-linked (GlcNAc...) asparagine). Cysteine 446 is a heme binding site.

Belongs to the cytochrome P450 family. Requires heme as cofactor.

Its subcellular location is the endoplasmic reticulum membrane. The enzyme catalyses 3-hydroxybenzyl alcohol + reduced [NADPH--hemoprotein reductase] + O2 = gentisyl alcohol + oxidized [NADPH--hemoprotein reductase] + H2O + H(+). It participates in mycotoxin biosynthesis; patulin biosynthesis. In terms of biological role, cytochrome P450 monooxygenase; part of the gene cluster that mediates the biosynthesis of patulin, an acetate-derived tetraketide mycotoxin produced by several fungal species that shows antimicrobial properties against several bacteria. PatI catalyzes the conversion of m-hydroxybenzyl alcohol into gentisyl alcohol. The pathway begins with the synthesis of 6-methylsalicylic acid by the polyketide synthase (PKS) patK via condensation of acetate and malonate units. The 6-methylsalicylic acid decarboxylase patG then catalyzes the decarboxylation of 6-methylsalicylic acid to yield m-cresol (also known as 3-methylphenol). These first reactions occur in the cytosol. The intermediate m-cresol is then transported into the endoplasmic reticulum where the cytochrome P450 monooxygenase patH converts it to m-hydroxybenzyl alcohol, which is further converted to gentisyl alcohol by the cytochrome P450 monooxygenase patI. The oxidoreductases patJ and patO further convert gentisyl alcohol to isoepoxydon in the vacuole. PatN catalyzes then the transformation of isoepoxydon into phyllostine. The cluster protein patF is responsible for the conversion from phyllostine to neopatulin whereas the alcohol dehydrogenase patD converts neopatulin to E-ascladiol. The steps between isoepoxydon and E-ascladiol occur in the cytosol, and E-ascladiol is probably secreted to the extracellular space by one of the cluster-specific transporters patC or patM. Finally, the secreted patulin synthase patE catalyzes the conversion of E-ascladiol to patulin. The sequence is that of Cytochrome P450 monooxygenase patI from Penicillium expansum (Blue mold rot fungus).